The primary structure comprises 354 residues: Mating-type protein MAT-1 (354 aa).

The segment at residues 60–117 (KAKKALNAFVGFRCYYIAIPAFKQWPMKKLSNLISLLWDRDPNKSLWSLMAKAWSNIR) is a DNA-binding region (alpha box).

The protein belongs to the MATALPHA1 family.

The protein localises to the nucleus. In terms of biological role, mating type proteins are sequence specific DNA-binding proteins that act as master switches in fungal differentiation by controlling gene expression in a cell type-specific fashion. Transcriptional activator that induces the transcription of alpha-specific genes. This is Mating-type protein MAT-1 (MAT1) from Cochliobolus cymbopogonis (Curvularia cymbopogonis).